Here is a 151-residue protein sequence, read N- to C-terminus: MEKKKIVVTAGTFDILHPGHYEILKFAKSLGDELIVIVARDETVKKLKGRKPIIPEEQRREMVEALKPVDKAVLGSLKNKLEPILKLKPDIIVLGPDQTTFDEETLKQELAKYNLYPEIVRFRGYKKCPFHSSFDIVKEIIRRFCSKEIKI.

Residues 12–13 (TF), 17–20 (HPGH), D97, and Y125 contribute to the ATP site.

This sequence belongs to the archaeal FAD synthase family. Homodimer. A divalent metal cation is required as a cofactor.

The enzyme catalyses FMN + ATP + H(+) = FAD + diphosphate. The protein operates within cofactor biosynthesis; FAD biosynthesis; FAD from FMN: step 1/1. Its function is as follows. Catalyzes the transfer of the AMP portion of ATP to flavin mononucleotide (FMN) to produce flavin adenine dinucleotide (FAD) coenzyme. This Methanocaldococcus sp. (strain FS406-22) protein is FAD synthase.